A 201-amino-acid chain; its full sequence is Glycerol-3-phosphate acyltransferase (201 aa).

6 consecutive transmembrane segments (helical) span residues 10–30 (MLIGALIFGYVLGSIPFGLIL), 60–80 (LAAATLILDALKGTAAALIAA), 86–106 (AAIAAGFGAFIGHLFPVWIGF), 116–136 (LGVLIGLAWAGALVFAAAWIV), 139–159 (LLTRYSSLSALVASLVVPIAL), and 166–186 (ALAALFAIMTVIVFIKHRANI).

This sequence belongs to the PlsY family. Probably interacts with PlsX.

It localises to the cell inner membrane. It catalyses the reaction an acyl phosphate + sn-glycerol 3-phosphate = a 1-acyl-sn-glycero-3-phosphate + phosphate. It participates in lipid metabolism; phospholipid metabolism. Functionally, catalyzes the transfer of an acyl group from acyl-phosphate (acyl-PO(4)) to glycerol-3-phosphate (G3P) to form lysophosphatidic acid (LPA). This enzyme utilizes acyl-phosphate as fatty acyl donor, but not acyl-CoA or acyl-ACP. This is Glycerol-3-phosphate acyltransferase from Brucella suis (strain ATCC 23445 / NCTC 10510).